The primary structure comprises 294 residues: Bifunctional protein FolD (294 aa).

Residues 175 to 177 and Ile-241 contribute to the NADP(+) site; that span reads GAS.

Belongs to the tetrahydrofolate dehydrogenase/cyclohydrolase family. Homodimer.

It carries out the reaction (6R)-5,10-methylene-5,6,7,8-tetrahydrofolate + NADP(+) = (6R)-5,10-methenyltetrahydrofolate + NADPH. The enzyme catalyses (6R)-5,10-methenyltetrahydrofolate + H2O = (6R)-10-formyltetrahydrofolate + H(+). The protein operates within one-carbon metabolism; tetrahydrofolate interconversion. Functionally, catalyzes the oxidation of 5,10-methylenetetrahydrofolate to 5,10-methenyltetrahydrofolate and then the hydrolysis of 5,10-methenyltetrahydrofolate to 10-formyltetrahydrofolate. The chain is Bifunctional protein FolD from Hahella chejuensis (strain KCTC 2396).